The sequence spans 116 residues: Small ribosomal subunit protein eS24 (116 aa).

Residues 81–116 (IEPEHMVERHKKVLEELESESEESEESESEESEEEE) are disordered. Over residues 96-116 (ELESESEESEESESEESEEEE) the composition is skewed to acidic residues.

Belongs to the eukaryotic ribosomal protein eS24 family.

In Methanopyrus kandleri (strain AV19 / DSM 6324 / JCM 9639 / NBRC 100938), this protein is Small ribosomal subunit protein eS24.